A 132-amino-acid chain; its full sequence is L-ectoine synthase (132 aa).

This sequence belongs to the ectoine synthase family.

The catalysed reaction is (2S)-4-acetamido-2-aminobutanoate = L-ectoine + H2O. It participates in amine and polyamine biosynthesis; ectoine biosynthesis; L-ectoine from L-aspartate 4-semialdehyde: step 3/3. In terms of biological role, catalyzes the circularization of gamma-N-acetyl-alpha,gamma-diaminobutyric acid (ADABA) to ectoine (1,4,5,6-tetrahydro-2-methyl-4-pyrimidine carboxylic acid), which is an excellent osmoprotectant. The sequence is that of L-ectoine synthase from Alkalilimnicola ehrlichii (strain ATCC BAA-1101 / DSM 17681 / MLHE-1).